Consider the following 440-residue polypeptide: Xylose isomerase (440 aa).

Residues His101 and Asp104 contribute to the active site. Positions 232, 268, 271, 296, 307, 309, and 339 each coordinate Mg(2+).

Belongs to the xylose isomerase family. In terms of assembly, homotetramer. Mg(2+) serves as cofactor.

Its subcellular location is the cytoplasm. It carries out the reaction alpha-D-xylose = alpha-D-xylulofuranose. This chain is Xylose isomerase, found in Escherichia coli O17:K52:H18 (strain UMN026 / ExPEC).